The primary structure comprises 935 residues: Pre-mRNA-splicing factor CWC22 homolog (935 aa).

Residues 1–179 (MSRSPSPDSP…PKDLLRTRTG (179 aa)) are disordered. Composition is skewed to basic and acidic residues over residues 13–25 (VRDD…REQS) and 49–70 (ESSR…DEKM). A compositionally biased stretch (basic residues) spans 84–148 (QHRRHRESRS…RSPARRRSPV (65 aa)). A compositionally biased stretch (basic and acidic residues) spans 159–175 (PTEEPEKKKNDPKDLLR). The region spanning 212–400 (KKKIHGLVNR…ETAMQIRKDK (189 aa)) is the MIF4G domain. Residues 463-489 (ADISSDEEEEVEDDDEESEAEEAPRKT) are disordered. A compositionally biased stretch (acidic residues) spans 465-483 (ISSDEEEEVEDDDEESEAE). Residues 502 to 633 (AFRREVYLTL…EWKILADVKM (132 aa)) enclose the MI domain. Residues 725–935 (KAAQSSSDSS…VGSDDRRRRH (211 aa)) are disordered. Residues 729 to 763 (SSSDSSSDSSDSSDSSDSSGSSDSSDDSSSSSSSD) show a composition bias toward low complexity. 2 stretches are compositionally biased toward basic and acidic residues: residues 780–891 (KKKE…DRKE) and 897–935 (DRRD…RRRH).

This sequence belongs to the CWC22 family.

The protein localises to the nucleus. It localises to the nucleus speckle. Its function is as follows. Required for early embryogenesis and tissue differentiation. Required for pre-mRNA splicing and for exon-junction complex (EJC) assembly. Hinders EIF4A3 from non-specifically binding RNA and escorts it to the splicing machinery to promote EJC assembly on mature mRNAs. Through its role in EJC assembly, required for nonsense-mediated mRNA decay. This is Pre-mRNA-splicing factor CWC22 homolog from Caenorhabditis briggsae.